The sequence spans 122 residues: Large ribosomal subunit protein uL14 (122 aa).

The protein belongs to the universal ribosomal protein uL14 family. Part of the 50S ribosomal subunit. Forms a cluster with proteins L3 and L19. In the 70S ribosome, L14 and L19 interact and together make contacts with the 16S rRNA in bridges B5 and B8.

Functionally, binds to 23S rRNA. Forms part of two intersubunit bridges in the 70S ribosome. The protein is Large ribosomal subunit protein uL14 of Nitrosomonas europaea (strain ATCC 19718 / CIP 103999 / KCTC 2705 / NBRC 14298).